The following is a 325-amino-acid chain: MFNRIVALTQKVLDGGQINQIEALELAQAEGADILILAAMAAKIREKYVGDKVELCSIISVKTGHCPEDCAFCAQSVHHHTEITPTEMLEEEKILAKAKAMEAAGAHRFDLVTAGLGMTEEDEDFKKILAIYKRLRQEVKLELCACLGTLTEKAAMQLREVGVTRYNHNLETARSFFSNIVTTHTYDERIETIKNVKKAGMEVCCGGIIGMGETMEQRIEFAFTLKELDVDAIPINVLNPIKGTKLENRPLLSPLEVIKTFAIFRFILPDKNIRYAGGREVNLRDMQALGLMAGLNGMLIGHYLTTKGREVETDLQMIRDLGLKI.

In terms of domain architecture, Radical SAM core spans 49–279 (VGDKVELCSI…DKNIRYAGGR (231 aa)). C66, C70, and C73 together coordinate [4Fe-4S] cluster. [2Fe-2S] cluster is bound by residues C144, C204, and R274.

This sequence belongs to the radical SAM superfamily. Biotin synthase family. In terms of assembly, homodimer. [4Fe-4S] cluster is required as a cofactor. [2Fe-2S] cluster serves as cofactor.

The enzyme catalyses (4R,5S)-dethiobiotin + (sulfur carrier)-SH + 2 reduced [2Fe-2S]-[ferredoxin] + 2 S-adenosyl-L-methionine = (sulfur carrier)-H + biotin + 2 5'-deoxyadenosine + 2 L-methionine + 2 oxidized [2Fe-2S]-[ferredoxin]. The protein operates within cofactor biosynthesis; biotin biosynthesis; biotin from 7,8-diaminononanoate: step 2/2. In terms of biological role, catalyzes the conversion of dethiobiotin (DTB) to biotin by the insertion of a sulfur atom into dethiobiotin via a radical-based mechanism. The sequence is that of Biotin synthase from Carboxydothermus hydrogenoformans (strain ATCC BAA-161 / DSM 6008 / Z-2901).